A 477-amino-acid polypeptide reads, in one-letter code: MNSIDLSRVHMIGIGGAGMSGVARILLSCGSVVSGSDVKESRPVAALRAMGATIAVGHKAENLAISGSMPTVVVTSFAAIPQDNPELQEARANNIPVIRRSDLLGELMEDHQQVLIAGTHGKTSTTSMAVVALQAAGKDPSFAIGGQLNKAGTNAHDGTGKAFVAEADESDASLLRYKPDIAVVTNIEPDHLDFFKTSEAYFKVFDDFAERVQPGGTLVVCLDDPHAAALGEKFKDRMTVRGYGSPAAAQQYPDVAFTVVEHMEVGPAGTRARITVGDDTVDVIMRIPGHHMVLNACAALTAGVTAGAELERLAAGISDFSGVRRRFEFHGRVSGGAFHDAEVYDDYAHHPTEVTAVLKAARQQQEARGIGRVVVAFQPHLYSRTMEFAAEFAEALSLADHAVILDIFGAREQPVEGVDSRIISDKMTIPVVFEPNFSAVAAQVKKIAQPNDIIVTMGAGSVTLLADEILTALRESE.

An ATP-binding site is contributed by 118 to 124; sequence GTHGKTS.

Belongs to the MurCDEF family.

The protein resides in the cytoplasm. The enzyme catalyses UDP-N-acetyl-alpha-D-muramate + L-alanine + ATP = UDP-N-acetyl-alpha-D-muramoyl-L-alanine + ADP + phosphate + H(+). Its pathway is cell wall biogenesis; peptidoglycan biosynthesis. In terms of biological role, cell wall formation. In Corynebacterium diphtheriae (strain ATCC 700971 / NCTC 13129 / Biotype gravis), this protein is UDP-N-acetylmuramate--L-alanine ligase.